The chain runs to 529 residues: Cytochrome P450 monooxygenase ausG (529 aa).

Residues 31-51 (FLVTCGLPWLLLLFSVTIILF) traverse the membrane as a helical segment. Cys-470 contributes to the heme binding site.

Belongs to the cytochrome P450 family. Heme is required as a cofactor.

It localises to the membrane. Its pathway is secondary metabolite biosynthesis; terpenoid biosynthesis. Its function is as follows. Cytochrome P450 monooxygenase; part of the gene cluster B that mediates the biosynthesis of austinol and dehydroaustinol, two fungal meroterpenoids. The first step of the pathway is the synthesis of 3,5-dimethylorsellinic acid by the polyketide synthase ausA. 3,5-dimethylorsellinic acid is then prenylated by the polyprenyl transferase ausN. Further epoxidation by the FAD-dependent monooxygenase ausM and cyclization by the probable terpene cyclase ausL lead to the formation of protoaustinoid A. Protoaustinoid A is then oxidized to spiro-lactone preaustinoid A3 by the combined action of the FAD-binding monooxygenases ausB and ausC, and the dioxygenase ausE. Acid-catalyzed keto-rearrangement and ring contraction of the tetraketide portion of preaustinoid A3 by ausJ lead to the formation of preaustinoid A4. The aldo-keto reductase ausK, with the help of ausH, is involved in the next step by transforming preaustinoid A4 into isoaustinone which is in turn hydroxylated by the P450 monooxygenase ausI to form austinolide. Finally, the cytochrome P450 monooxygenase ausG modifies austinolide to austinol. Austinol can be further modified to dehydroaustinol which forms a diffusible complex with diorcinol that initiates conidiation. Due to genetic rearrangements of the clusters and the subsequent loss of some enzymes, the end products of the Emericella nidulans austinoid biosynthesis clusters are austinol and dehydroaustinol, even if additional enzymes, such as the O-acetyltransferase ausQ and the cytochrome P450 monooxygenase ausR are still functional. The sequence is that of Cytochrome P450 monooxygenase ausG from Emericella nidulans (strain FGSC A4 / ATCC 38163 / CBS 112.46 / NRRL 194 / M139) (Aspergillus nidulans).